The sequence spans 242 residues: MIILPAIDLKEGKCIRLYQGDFKASKVVAEDPIEVALKFKENGAEYIHIVDLDGALTGEIKNLSIISYIIKTINIPVELGGGIRNLNTIDMLIDAGIERVILGTAALNNRGLVEKAVKKYDEKIAIGIDAKNEKVAINGWLNVSSINYIDFAKEMEKIGVRNIIFTDISKDGTLKGPNLDQLKKLNESISCNVIASGGIKDIEDLKVIKEMDVYGAIVGKAIYSGNINLNEAIKIINKESSK.

The active-site Proton acceptor is aspartate 8. The Proton donor role is filled by aspartate 129.

The protein belongs to the HisA/HisF family.

The protein resides in the cytoplasm. The catalysed reaction is 1-(5-phospho-beta-D-ribosyl)-5-[(5-phospho-beta-D-ribosylamino)methylideneamino]imidazole-4-carboxamide = 5-[(5-phospho-1-deoxy-D-ribulos-1-ylimino)methylamino]-1-(5-phospho-beta-D-ribosyl)imidazole-4-carboxamide. It participates in amino-acid biosynthesis; L-histidine biosynthesis; L-histidine from 5-phospho-alpha-D-ribose 1-diphosphate: step 4/9. This is 1-(5-phosphoribosyl)-5-[(5-phosphoribosylamino)methylideneamino] imidazole-4-carboxamide isomerase from Clostridium botulinum (strain Langeland / NCTC 10281 / Type F).